The primary structure comprises 798 residues: Integrin beta-1 (798 aa).

Positions 1–20 are cleaved as a signal peptide; it reads MNLQLIFWIGLISSVCCVFG. Topologically, residues 21–728 are extracellular; sequence QADEDRCLKA…ETPECPTGPD (708 aa). The 51-residue stretch at 26–76 folds into the PSI domain; it reads RCLKANAKSCGECIQAGPNCGWCTNSTFLQEGMPTSARCDDLEALKKKGCH. 28 disulfides stabilise this stretch: Cys-27/Cys-45, Cys-35/Cys-464, Cys-38/Cys-64, Cys-48/Cys-75, Cys-207/Cys-213, Cys-261/Cys-301, Cys-401/Cys-415, Cys-435/Cys-462, Cys-466/Cys-486, Cys-477/Cys-489, Cys-491/Cys-500, Cys-502/Cys-533, Cys-516/Cys-531, Cys-525/Cys-536, Cys-538/Cys-553, Cys-555/Cys-576, Cys-560/Cys-574, Cys-568/Cys-579, Cys-581/Cys-590, Cys-592/Cys-615, Cys-599/Cys-613, Cys-607/Cys-618, Cys-620/Cys-630, Cys-633/Cys-636, Cys-640/Cys-691, Cys-646/Cys-665, Cys-649/Cys-661, and Cys-699/Cys-723. The span at 75-91 shows a compositional bias: basic and acidic residues; the sequence is CHPNDTENPRGSKDIKK. The interval 75-105 is disordered; that stretch reads CHPNDTENPRGSKDIKKNKNVTNRSKGTAEK. 2 N-linked (GlcNAc...) asparagine glycosylation sites follow: Asn-94 and Asn-97. A VWFA domain is found at 140-378; it reads DYPIDLYYLM…QLIIDAYNSL (239 aa). Mg(2+)-binding residues include Ser-152 and Ser-154. Residues Ser-154, Asp-157, Asp-158, and Glu-189 each contribute to the Ca(2+) site. Residues 207–213 are CX3CL1-binding; the sequence is CTNEQNC. N-linked (GlcNAc...) asparagine glycosylation is present at Asn-212. Ca(2+) contacts are provided by Asn-244, Asp-246, Pro-248, and Glu-249. Residue Glu-249 coordinates Mg(2+). Asn-269 is a glycosylation site (N-linked (GlcNAc...) asparagine). The tract at residues 295–314 is CX3CL1-binding; that stretch reads LPNDGQCHLKNDVYTMSHYY. Ala-362 serves as a coordination point for Ca(2+). The segment at 383 to 465 is interaction with TMEM182; sequence ILENSKLPEG…IILQFICECE (83 aa). N-linked (GlcNAc...) asparagine glycans are attached at residues Asn-406 and Asn-417. I-EGF domains lie at 466 to 501, 502 to 554, 555 to 591, and 592 to 631; these read CQGE…RHCE, CSTD…KFCE, CDNF…SACD, and CSLD…PTCE. A glycan (N-linked (GlcNAc...) asparagine) is linked at Asn-481. Asn-520 carries an N-linked (GlcNAc...) asparagine glycan. Asn-584 carries N-linked (GlcNAc...) asparagine glycosylation. A glycan (N-linked (GlcNAc...) asparagine) is linked at Asn-669. The chain crosses the membrane as a helical span at residues 729-749; sequence IIPIVAGVVAGIVLIGLALLL. Over 750 to 798 the chain is Cytoplasmic; that stretch reads IWKLLMIIHDRREFAKFEKERMNAKWDTGENPIYKSAVTTVVNPKYEGK. The signal for sorting from recycling endosomes; interaction with ACAP1 stretch occupies residues 762–767; sequence EFAKFE. Thr-777 is subject to Phosphothreonine. Phosphotyrosine is present on Tyr-783. Phosphoserine is present on Ser-785. Residues 785 to 792 are interaction with ITGB1BP1; the sequence is SAVTTVVN. Thr-789 carries the post-translational modification Phosphothreonine. Lys-794 is subject to N6-acetyllysine; alternate. A Glycyl lysine isopeptide (Lys-Gly) (interchain with G-Cter in SUMO1); alternate cross-link involves residue Lys-794.

Belongs to the integrin beta chain family. In terms of assembly, interacts with seprase FAP (seprase); the interaction occurs at the cell surface of invadopodia membrane in a collagen-dependent manner. Heterodimer of an alpha and a beta subunit. Beta-1 associates with either alpha-1, alpha-2, alpha-3, alpha-4, alpha-5, alpha-6, alpha-7, alpha-8, alpha-9, alpha-10, alpha-11 or alpha-V. ITGA6:ITGB1 is found in a complex with CD9; interaction takes place in oocytes and is involved in sperm-egg fusion. Binds LGALS3BP and NMRK2, when associated with alpha-7, but not with alpha-5. Interacts with FLNA, FLNB, FLNC and RANBP9. Interacts with KRT1 in the presence of RACK1 and SRC. Interacts with JAML; integrin alpha-4/beta-1 may regulate leukocyte to endothelial cells adhesion by controlling JAML homodimerization. Interacts with RAB21. Interacts (via the cytoplasmic region) with RAB25 (via the hypervariable C-terminal region). Interacts with MYO10. Interacts with ITGB1BP1 (via C-terminal region); the interaction is a prerequisite for focal adhesion disassembly. Interacts with TLN1; the interaction is prevented by competitive binding of ITGB1BP1. Interacts with ACAP1; required for ITGB1 recycling. Interacts with ASAP3. Interacts with FERMT2; the interaction is inhibited in presence of ITGB1BP1. Interacts with DAB2. Interacts with FGR and HCK. Interacts with alpha-7A and alpha-7B in adult skeletal muscle. Interacts with alpha-7B in cardiomyocytes of adult heart. Interacts with EMP2; the interaction may be direct or indirect and ITGB1 has a heterodimer form. ITGA5:ITGB1 interacts with CCN3. ITGA4:ITGB1 is found in a ternary complex with CX3CR1 and CX3CL1. ITGA5:ITGB1 interacts with FBN1. ITGA5:ITGB1 acts as a receptor for fibronectin FN1 and mediates R-G-D-dependent cell adhesion to FN1. ITGA5:ITGB1 interacts with IL1B. Interacts with MDK. ITGA4:ITGB1 interacts with MDK; this interaction mediates MDK-induced osteoblast cells migration through PXN phosphorylation. ITGA6:ITGB1 interacts with MDK; this interaction mediates MDK-induced neurite-outgrowth. ITGA5:ITGB1 interacts with ACE2. Interacts with TMEM182 and LAMB1. Interacts with tensin TNS3; TNS3 also interacts with PEAK1, thus acting as an adapter molecule to bridge the association of PEAK1 with ITGB1. Interacts with tensin TNS4; the interaction displaces tensin TNS3 from the ITGB1 cytoplasmic tail and promotes ITGB1 stability. Integrin ITGA9:ITGB1 interacts with SPP1/OPN (via N-terminus). Integrin ITGA9:ITGB1 interacts with TNC/TNFN3 (via the 3rd Fibronectin type-III domain). Integrins ITGA4:ITGB1 and ITGA9:ITGB1 interact with SVEP1 (via Sushi domain 21); thereby inhibit Ca(2+) intracellular signaling and as a result repress vasocontraction. ITGA4:ITGB1 and ITGA5:ITGB1 interacts with SELP. Interacts with CD248. ITGA5:ITGB1 interacts with IGFBP1. ITGA4:ITGB1 interacts with BCAM. Interacts with ADGRG6.

The protein resides in the cell membrane. Its subcellular location is the cell projection. The protein localises to the invadopodium membrane. It localises to the ruffle membrane. It is found in the recycling endosome. The protein resides in the melanosome. Its subcellular location is the cell junction. The protein localises to the focal adhesion. It localises to the lamellipodium. It is found in the ruffle. Integrins alpha-1/beta-1, alpha-2/beta-1, alpha-10/beta-1 and alpha-11/beta-1 are receptors for collagen. Integrins alpha-1/beta-1 and alpha-2/beta-2 recognize the proline-hydroxylated sequence G-F-P-G-E-R in collagen. Integrins alpha-2/beta-1, alpha-3/beta-1, alpha-4/beta-1, alpha-5/beta-1, alpha-8/beta-1, alpha-10/beta-1, alpha-11/beta-1 and alpha-V/beta-1 are receptors for fibronectin. Alpha-4/beta-1 recognizes one or more domains within the alternatively spliced CS-1 and CS-5 regions of fibronectin. Integrin alpha-5/beta-1 is a receptor for fibrinogen. Integrin alpha-1/beta-1, alpha-2/beta-1, alpha-6/beta-1 and alpha-7/beta-1 are receptors for lamimin. Integrin alpha-6/beta-1 (ITGA6:ITGB1) is present in oocytes and is involved in sperm-egg fusion. Integrin alpha-4/beta-1 is a receptor for VCAM1 and recognizes the sequence Q-I-D-S in VCAM1. Integrin alpha-9/beta-1 is a receptor for VCAM1, cytotactin and osteopontin. It recognizes the sequence A-E-I-D-G-I-E-L in cytotactin. Integrin alpha-3/beta-1 is a receptor for epiligrin, thrombospondin and CSPG4. Integrin alpha-3/beta-1 provides a docking site for FAP (seprase) at invadopodia plasma membranes in a collagen-dependent manner and hence may participate in the adhesion, formation of invadopodia and matrix degradation processes, promoting cell invasion. Alpha-3/beta-1 may mediate with LGALS3 the stimulation by CSPG4 of endothelial cells migration. Integrin alpha-V/beta-1 is a receptor for vitronectin. Beta-1 integrins recognize the sequence R-G-D in a wide array of ligands. When associated with alpha-7/beta-1 integrin, regulates cell adhesion and laminin matrix deposition. Involved in promoting endothelial cell motility and angiogenesis. Involved in osteoblast compaction through the fibronectin fibrillogenesis cell-mediated matrix assembly process and the formation of mineralized bone nodules. May be involved in up-regulation of the activity of kinases such as PKC via binding to KRT1. Together with KRT1 and RACK1, serves as a platform for SRC activation or inactivation. Plays a mechanistic adhesive role during telophase, required for the successful completion of cytokinesis. ITGA4:ITGB1 binds to fractalkine (CX3CL1) and may act as its coreceptor in CX3CR1-dependent fractalkine signaling. ITGA4:ITGB1 and ITGA5:ITGB1 bind to PLA2G2A via a site (site 2) which is distinct from the classical ligand-binding site (site 1) and this induces integrin conformational changes and enhanced ligand binding to site 1. ITGA5:ITGB1 acts as a receptor for fibrillin-1 (FBN1) and mediates R-G-D-dependent cell adhesion to FBN1. ITGA5:ITGB1 is a receptor for IL1B and binding is essential for IL1B signaling. ITGA5:ITGB3 is a receptor for soluble CD40LG and is required for CD40/CD40LG signaling. Plays an important role in myoblast differentiation and fusion during skeletal myogenesis. ITGA9:ITGB1 may play a crucial role in SVEP1/polydom-mediated myoblast cell adhesion. Integrins ITGA9:ITGB1 and ITGA4:ITGB1 repress PRKCA-mediated L-type voltage-gated channel Ca(2+) influx and ROCK-mediated calcium sensitivity in vascular smooth muscle cells via their interaction with SVEP1, thereby inhibit vasocontraction. The chain is Integrin beta-1 from Camelus bactrianus (Bactrian camel).